A 298-amino-acid polypeptide reads, in one-letter code: Acetyl-coenzyme A carboxylase carboxyl transferase subunit beta (298 aa).

A disordered region spans residues 1-21 (MNQEVKSGKVLSPSTPWTQRP). The C4-type zinc-finger motif lies at 20–67 (RPVPGIEVADEQQTLKATFTEPTIECPECHALVTRTAISFNAYVCPQC). In terms of domain architecture, CoA carboxyltransferase N-terminal spans 41–298 (PTIECPECHA…RLVSKLMNLP (258 aa)). Positions 45, 48, 64, and 67 each coordinate Zn(2+).

The protein belongs to the AccD/PCCB family. Acetyl-CoA carboxylase is a heterohexamer composed of biotin carboxyl carrier protein (AccB), biotin carboxylase (AccC) and two subunits each of ACCase subunit alpha (AccA) and ACCase subunit beta (AccD). It depends on Zn(2+) as a cofactor.

It is found in the cytoplasm. The catalysed reaction is N(6)-carboxybiotinyl-L-lysyl-[protein] + acetyl-CoA = N(6)-biotinyl-L-lysyl-[protein] + malonyl-CoA. It participates in lipid metabolism; malonyl-CoA biosynthesis; malonyl-CoA from acetyl-CoA: step 1/1. Component of the acetyl coenzyme A carboxylase (ACC) complex. Biotin carboxylase (BC) catalyzes the carboxylation of biotin on its carrier protein (BCCP) and then the CO(2) group is transferred by the transcarboxylase to acetyl-CoA to form malonyl-CoA. This chain is Acetyl-coenzyme A carboxylase carboxyl transferase subunit beta, found in Acinetobacter baumannii (strain SDF).